Reading from the N-terminus, the 59-residue chain is Cecropin-A1 (59 aa).

Residues 1–23 (MNFTKLFAIVLLAALVLLGQTEA) form the signal peptide.

It belongs to the cecropin family.

The protein resides in the secreted. Cecropins have lytic and antibacterial activity against several Gram-positive and Gram-negative bacteria. The sequence is that of Cecropin-A1 (CECA1) from Aedes albopictus (Asian tiger mosquito).